We begin with the raw amino-acid sequence, 235 residues long: 2,3-bisphosphoglycerate-dependent phosphoglycerate mutase (235 aa).

Residues 8–15, 21–22, Arg-58, 110–113, Lys-121, 137–138, and 181–182 each bind substrate; these read RHGESIWN, TG, ERYY, RR, and GN. The active-site Tele-phosphohistidine intermediate is His-9. Glu-110 functions as the Proton donor/acceptor in the catalytic mechanism.

The protein belongs to the phosphoglycerate mutase family. BPG-dependent PGAM subfamily.

It carries out the reaction (2R)-2-phosphoglycerate = (2R)-3-phosphoglycerate. The protein operates within carbohydrate degradation; glycolysis; pyruvate from D-glyceraldehyde 3-phosphate: step 3/5. In terms of biological role, catalyzes the interconversion of 2-phosphoglycerate and 3-phosphoglycerate. The chain is 2,3-bisphosphoglycerate-dependent phosphoglycerate mutase from Methanococcus vannielii (strain ATCC 35089 / DSM 1224 / JCM 13029 / OCM 148 / SB).